Here is a 766-residue protein sequence, read N- to C-terminus: DENN domain-containing protein 1B (766 aa).

Residues 14–143 enclose the uDENN domain; sequence DLVLKVKCHA…YNHPVPKANT (130 aa). Positions 160 to 296 constitute a cDENN domain; it reads GLPTIPESRN…VVSALKNKLK (137 aa). The 78-residue stretch at 298 to 375 folds into the dDENN domain; the sequence is QSTATGDGVA…DGRLAKLNAG (78 aa). Positions 378–382 match the FXDXF motif motif; it reads FSDIF. The interval 472–523 is disordered; it reads NEKGENREKHKLSQTHLKRPHKSLDGTLYDDDDDDDDIERASKISSEDGEET. A compositionally biased stretch (basic residues) spans 480–492; sequence KHKLSQTHLKRPH. The span at 499–509 shows a compositional bias: acidic residues; the sequence is LYDDDDDDDDI. Tyrosine 500 is modified (phosphotyrosine). Serine 516, serine 517, serine 530, and serine 533 each carry phosphoserine. The short motif at 547 to 556 is the Clathrin box element; the sequence is DLLGEILDTL. Disordered regions lie at residues 611–634 and 652–732; these read LGQD…VSSG and LCAD…KPSK. Residues serine 632 and serine 633 each carry the phosphoserine modification. Over residues 694–704 the composition is skewed to polar residues; that stretch reads TPGQAPLQSED. Residues 722-732 are compositionally biased toward basic and acidic residues; the sequence is KAGKEDTKPSK.

In terms of assembly, interacts with RAB35. Interacts with clathrin heavy chain/CLTC. Interacts with components of the adapter protein complex 2 (AP-2) AP2A2 and AP2B1. Interacts with CD3E. In terms of processing, phosphorylated on serine and/or threonine, possibly regulating the guanine nucleotide exchange factor (GEF) activity. Expressed in a subset of dendritic cells (DCs).

The protein resides in the cytoplasm. Its subcellular location is the cytosol. It localises to the cytoplasmic vesicle. The protein localises to the clathrin-coated vesicle. Functionally, guanine nucleotide exchange factor (GEF) for RAB35 that acts as a regulator of T-cell receptor (TCR) internalization in TH2 cells. Acts by promoting the exchange of GDP to GTP, converting inactive GDP-bound RAB35 into its active GTP-bound form. Plays a role in clathrin-mediated endocytosis. Controls cytokine production in TH2 lymphocytes by controlling the rate of TCR internalization and routing to endosomes: acts by mediating clathrin-mediated endocytosis of TCR via its interaction with the adapter protein complex 2 (AP-2) and GEF activity. Dysregulation leads to impaired TCR down-modulation and recycling, affecting cytokine production in TH2 cells. The chain is DENN domain-containing protein 1B from Mus musculus (Mouse).